We begin with the raw amino-acid sequence, 200 residues long: Protein GrpE (200 aa).

The span at 1–27 shows a compositional bias: basic and acidic residues; it reads MTKQEKAENQEKPTEETVEETPKKETP. Positions 1-50 are disordered; sequence MTKQEKAENQEKPTEETVEETPKKETPFEPVMEADEVEETTEAQAPVEEA. The segment covering 32–41 has biased composition (acidic residues); the sequence is MEADEVEETT.

Belongs to the GrpE family. As to quaternary structure, homodimer.

The protein localises to the cytoplasm. Functionally, participates actively in the response to hyperosmotic and heat shock by preventing the aggregation of stress-denatured proteins, in association with DnaK and GrpE. It is the nucleotide exchange factor for DnaK and may function as a thermosensor. Unfolded proteins bind initially to DnaJ; upon interaction with the DnaJ-bound protein, DnaK hydrolyzes its bound ATP, resulting in the formation of a stable complex. GrpE releases ADP from DnaK; ATP binding to DnaK triggers the release of the substrate protein, thus completing the reaction cycle. Several rounds of ATP-dependent interactions between DnaJ, DnaK and GrpE are required for fully efficient folding. This chain is Protein GrpE, found in Latilactobacillus sakei subsp. sakei (strain 23K) (Lactobacillus sakei subsp. sakei).